An 84-amino-acid polypeptide reads, in one-letter code: Small ribosomal subunit protein bS20 (84 aa).

It belongs to the bacterial ribosomal protein bS20 family.

Its function is as follows. Binds directly to 16S ribosomal RNA. This Levilactobacillus brevis (strain ATCC 367 / BCRC 12310 / CIP 105137 / JCM 1170 / LMG 11437 / NCIMB 947 / NCTC 947) (Lactobacillus brevis) protein is Small ribosomal subunit protein bS20.